We begin with the raw amino-acid sequence, 438 residues long: DNA polymerase IV 1 (438 aa).

One can recognise a UmuC domain in the interval leucine 46–glycine 226. Aspartate 50 and aspartate 143 together coordinate Mg(2+). Glutamate 144 is an active-site residue.

Belongs to the DNA polymerase type-Y family. Monomer. Mg(2+) is required as a cofactor.

Its subcellular location is the cytoplasm. It carries out the reaction DNA(n) + a 2'-deoxyribonucleoside 5'-triphosphate = DNA(n+1) + diphosphate. Poorly processive, error-prone DNA polymerase involved in untargeted mutagenesis. Copies undamaged DNA at stalled replication forks, which arise in vivo from mismatched or misaligned primer ends. These misaligned primers can be extended by PolIV. Exhibits no 3'-5' exonuclease (proofreading) activity. May be involved in translesional synthesis, in conjunction with the beta clamp from PolIII. In Mesorhizobium japonicum (strain LMG 29417 / CECT 9101 / MAFF 303099) (Mesorhizobium loti (strain MAFF 303099)), this protein is DNA polymerase IV 1 (dinB1).